Reading from the N-terminus, the 1118-residue chain is MPQLLNSILNVSKVFQDYAEYHGVGASLSKKELKQLLLTEFGDILRRPNDPETVETILEHLDRDRNGYVDFHEYLLLVFQLVQACHHKLDSKFYGSRTSSQKEHDQEGTRSHKFSESTGRQHRQRYEGERRNSHHNQSEGQHQNVQHDQSQRQDKDSERHDTDPHCGQSETFHGDSHYGHSERQDTDYSSDQSESDNESSSSSQRLGYKSSHEQPKGQGYVFALSQSKNPEQAFHYGQSKTSGQQSSHGQSGRFRKDSYSSQTSQQESDSYEQYGSQHQKSGNSQTERQGQNSQYGQTNKKGHSSYHEQTEGQGQSFHYGQKGRKDQSFQQGQKGRKDQSPHLGQKGRQDQSPHRGQKGRQDQSPHQGQKGRQDQSPHRGQKGRQDQSPHQGQKGRQDQSPHLGQKGRQDQSPHQGQKGRQDQSPHQGQKGRQDQSSHQGQKGRQDQSSHQGQKGRQDQSSHQGQKGRQDQSSHQGQREGQDQNSQWHRTDSQGQSFHYGQTGGHSLSSHQGQTDSQGQNSNWHRTDSQGQSFHYGQTGGQGLSSHQGQTDSQGQNSNWHRTDSQGQSFHFDQAGREVQGSHHGQTDRQSQNSNWHRTDSQGQSFHFDQAGKEVQGSHQGQTDSQGQSSHWHQTDRQGQSSQQGHKDRQGQNTHQGQKGRQDLSPHQGQKGRQDQSPHLGQKGRHDQSPHQGQKGRHDQSPHQGQKGRQDLSSHQGQKGRQDQSPHLGQKGRHDQSPHRGQKGRQDQSPHQGQKGRQDQSSHQGQREGQDQNSHWHRTDRQGQSFHYGQTGGQGLSSHQGQTDSQGQNSQWHRTDSQGQSFHFDQAGREGQSSHHGQTDRQSQSSHCGQSEIGKTENQGQNRHSLGTDRTRRDSYVEQSGRSVKLSQQNSREEVRQTQSQRSHDRREQQIQQQTWKPKEDNQHKLLAQVQQEPYSYEEYDWQSQSSEQDHCGEEEYQDWDRHSVEDQENLYEMQNWQTHEEEQSHQTSDRQTHVDEQNQQRQHRQTHEENHDHQHGRHHEDEHNHRRQDHHQQRERQTHEEKEKYQGGQDQSRSFPNREKSHMSEDDQCEGPQGRRFHPTHGGGKSQRREKSGNHPTKPANYSSPLYDYVQEQAAYQY.

An S-100-like region spans residues 1–91 (MPQLLNSILN…VQACHHKLDS (91 aa)). EF-hand domains follow at residues 13–48 (KVFQDYAEYHGVGASLSKKELKQLLLTEFGDILRRP) and 49–84 (NDPETVETILEHLDRDRNGYVDFHEYLLLVFQLVQA). 7 residues coordinate Ca(2+): S27, E32, D62, D64, N66, Y68, and E73. Residues 94 to 1118 (YGSRTSSQKE…YVQEQAAYQY (1025 aa)) are disordered. Residues 100–115 (SQKEHDQEGTRSHKFS) show a composition bias toward basic and acidic residues. Polar residues predominate over residues 138 to 148 (SEGQHQNVQHD). Composition is skewed to basic and acidic residues over residues 149–164 (QSQRQDKDSERHDTDP) and 172–186 (FHGDSHYGHSERQDT). Positions 237–252 (GQSKTSGQQSSHGQSG) are enriched in low complexity. The span at 259–299 (YSSQTSQQESDSYEQYGSQHQKSGNSQTERQGQNSQYGQTN) shows a compositional bias: polar residues. Repeat copies occupy residues 273 to 284 (QYGSQHQKSGNS), 285 to 296 (QTERQGQNSQYG), 297 to 308 (QTNKKGHSSYHE), 309 to 320 (QTEGQGQSFHYG), 321 to 332 (QKGRKDQSFQQG), 333 to 344 (QKGRKDQSPHLG), 345 to 356 (QKGRQDQSPHRG), 357 to 368 (QKGRQDQSPHQG), 369 to 380 (QKGRQDQSPHRG), 381 to 392 (QKGRQDQSPHQG), 393 to 404 (QKGRQDQSPHLG), 405 to 416 (QKGRQDQSPHQG), 417 to 428 (QKGRQDQSPHQG), 429 to 440 (QKGRQDQSSHQG), 441 to 452 (QKGRQDQSSHQG), 453 to 464 (QKGRQDQSSHQG), 465 to 476 (QKGRQDQSSHQG), 477 to 488 (QREGQDQNSQWH), 489 to 500 (RTDSQGQSFHYG), 501 to 512 (QTGGHSLSSHQG), 513 to 524 (QTDSQGQNSNWH), 525 to 536 (RTDSQGQSFHYG), 537 to 548 (QTGGQGLSSHQG), 549 to 560 (QTDSQGQNSNWH), 561 to 572 (RTDSQGQSFHFD), 573 to 584 (QAGREVQGSHHG), 585 to 596 (QTDRQSQNSNWH), 597 to 608 (RTDSQGQSFHFD), 609 to 620 (QAGKEVQGSHQG), 621 to 632 (QTDSQGQSSHWH), 633 to 644 (QTDRQGQSSQQG), 645 to 656 (HKDRQGQNTHQG), 657 to 668 (QKGRQDLSPHQG), 669 to 680 (QKGRQDQSPHLG), 681 to 692 (QKGRHDQSPHQG), 693 to 704 (QKGRHDQSPHQG), 705 to 716 (QKGRQDLSSHQG), 717 to 728 (QKGRQDQSPHLG), 729 to 740 (QKGRHDQSPHRG), 741 to 752 (QKGRQDQSPHQG), 753 to 764 (QKGRQDQSSHQG), 765 to 776 (QREGQDQNSHWH), 777 to 788 (RTDRQGQSFHYG), 789 to 800 (QTGGQGLSSHQG), 801 to 812 (QTDSQGQNSQWH), 813 to 824 (RTDSQGQSFHFD), 825 to 836 (QAGREGQSSHHG), and 837 to 848 (QTDRQSQSSHCG). The segment at 273–848 (QYGSQHQKSG…DRQSQSSHCG (576 aa)) is 48 X 12 AA approximate tandem repeats of Q-[KT]-[GD]-[RS]-Q-[DG]-Q-S-[PS]-H-X-G. The segment at 321-764 (QKGRKDQSFQ…GRQDQSSHQG (444 aa)) is 22 X 12 AA approximate tandem repeats of Q-K-G-R-Q-D-Q-S-P-H-Q-G. 2 stretches are compositionally biased toward basic and acidic residues: residues 347-363 (GRQDQSPHRGQKGRQDQ) and 371-387 (GRQDQSPHRGQKGRQDQ). A compositionally biased stretch (polar residues) spans 434–466 (DQSSHQGQKGRQDQSSHQGQKGRQDQSSHQGQK). Residues 467 to 481 (GRQDQSSHQGQREGQ) show a composition bias toward basic and acidic residues. 2 stretches are compositionally biased toward polar residues: residues 482–535 (DQNS…SFHY) and 543–570 (LSSHQGQTDSQGQNSNWHRTDSQGQSFH). Composition is skewed to polar residues over residues 587-606 (DRQSQNSNWHRTDSQGQSFH) and 616-643 (GSHQGQTDSQGQSSHWHQTDRQGQSSQQ). Over residues 710–726 (DLSSHQGQKGRQDQSPH) the composition is skewed to polar residues. 2 stretches are compositionally biased toward basic and acidic residues: residues 731–747 (GRHDQSPHRGQKGRQDQ) and 755–769 (GRQDQSSHQGQREGQ). 3 stretches are compositionally biased toward polar residues: residues 795–822 (LSSHQGQTDSQGQNSQWHRTDSQGQSFH), 833–848 (SHHGQTDRQSQSSHCG), and 855–864 (TENQGQNRHS). The segment covering 865-875 (LGTDRTRRDSY) has biased composition (basic and acidic residues). Positions 876–889 (VEQSGRSVKLSQQN) are enriched in polar residues. 5 stretches are compositionally biased toward basic and acidic residues: residues 890 to 908 (SREEVRQTQSQRSHDRREQ), 947 to 965 (EQDHCGEEEYQDWDRHSVE), 978 to 998 (THEEEQSHQTSDRQTHVDEQN), 1005 to 1045 (QTHE…KEKY), and 1056 to 1065 (PNREKSHMSE).

The protein belongs to the S100-fused protein family. Post-translationally, potential substrate of transglutaminase. Some arginines are probably converted to citrullines by peptidylarginine deimidase. In terms of tissue distribution, detectable in the stratified internal epithelia of forestomach and tongue and to a lesser degree in normal skin epidermis, where it is restricted to the differentiated suprabasal cell layers. Overexpressed in skin tumors.

Its subcellular location is the secreted. The protein resides in the extracellular space. It localises to the extracellular matrix. Its function is as follows. Involved in the cornified cell envelope formation. Multifunctional epidermal matrix protein. The polypeptide is Repetin (Rptn) (Mus musculus (Mouse)).